The sequence spans 1060 residues: DNA topoisomerase 1 (1060 aa).

Residues 1 to 141 (MILVIAEKPN…KRMKFSALTK (141 aa)) form the Toprim domain. 2 residues coordinate Mg(2+): Glu-7 and Asp-107. The Topo IA-type catalytic domain occupies 156 to 947 (NFGMANAGIA…EAKIRLTKIL (792 aa)). Residues 196 to 201 (STGRVQ) form an interaction with DNA region. The DOD-type homing endonuclease domain occupies 482–591 (LIGYLAGKGG…IKVYLQLLGI (110 aa)). Tyr-690 functions as the O-(5'-phospho-DNA)-tyrosine intermediate in the catalytic mechanism. Residues 978-1006 (CPKCGGDLIVKYNEKTGKRFVGCSNWPKC) form a C4-type 1 zinc finger. Residues 1025–1050 (CCNGAPVVIIREKDGREWEICLDMNC) form a C4-type 2; atypical zinc finger.

Belongs to the type IA topoisomerase family. Monomer. Mg(2+) serves as cofactor. Post-translationally, this protein undergoes a protein self splicing that involves a post-translational excision of the intervening region (intein) followed by peptide ligation.

It catalyses the reaction ATP-independent breakage of single-stranded DNA, followed by passage and rejoining.. Its function is as follows. Releases the supercoiling and torsional tension of DNA, which is introduced during the DNA replication and transcription, by transiently cleaving and rejoining one strand of the DNA duplex. Introduces a single-strand break via transesterification at a target site in duplex DNA. The scissile phosphodiester is attacked by the catalytic tyrosine of the enzyme, resulting in the formation of a DNA-(5'-phosphotyrosyl)-enzyme intermediate and the expulsion of a 3'-OH DNA strand. The free DNA strand then undergoes passage around the unbroken strand, thus removing DNA supercoils. Finally, in the religation step, the DNA 3'-OH attacks the covalent intermediate to expel the active-site tyrosine and restore the DNA phosphodiester backbone. The polypeptide is DNA topoisomerase 1 (topA) (Pyrococcus furiosus (strain ATCC 43587 / DSM 3638 / JCM 8422 / Vc1)).